A 387-amino-acid chain; its full sequence is Succinate--CoA ligase [ADP-forming] subunit beta (387 aa).

In terms of domain architecture, ATP-grasp spans 9 to 236 (KGLFAKHNVP…RAATDPLELK (228 aa)). Residues Lys-45, 52-54 (GRG), Ser-94, and Glu-99 contribute to the ATP site. Mg(2+) is bound by residues Asn-191 and Asp-205. Residues Asn-256 and 318 to 320 (GIT) each bind substrate.

Belongs to the succinate/malate CoA ligase beta subunit family. Heterotetramer of two alpha and two beta subunits. The cofactor is Mg(2+).

The enzyme catalyses succinate + ATP + CoA = succinyl-CoA + ADP + phosphate. The catalysed reaction is GTP + succinate + CoA = succinyl-CoA + GDP + phosphate. It functions in the pathway carbohydrate metabolism; tricarboxylic acid cycle; succinate from succinyl-CoA (ligase route): step 1/1. Functionally, succinyl-CoA synthetase functions in the citric acid cycle (TCA), coupling the hydrolysis of succinyl-CoA to the synthesis of either ATP or GTP and thus represents the only step of substrate-level phosphorylation in the TCA. The beta subunit provides nucleotide specificity of the enzyme and binds the substrate succinate, while the binding sites for coenzyme A and phosphate are found in the alpha subunit. This chain is Succinate--CoA ligase [ADP-forming] subunit beta, found in Mycobacterium ulcerans (strain Agy99).